The primary structure comprises 678 residues: Macrolide export ATP-binding/permease protein MacB 1 (678 aa).

In terms of domain architecture, ABC transporter spans 11–249 (LRLENVSREF…PKMVDIPSVI (239 aa)). An ATP-binding site is contributed by 47–54 (GTSGSGKS). 4 helical membrane passes run 303 to 323 (ALTMLGIIIGIASVVSVVALG), 558 to 578 (IAVISLIVGGIGVMNIMLVSV), 608 to 628 (LVCLLGGSLGVALSLGIGLLF), and 641 to 661 (AASIITAFVCSSLIGVIFGFF).

Belongs to the ABC transporter superfamily. Macrolide exporter (TC 3.A.1.122) family. As to quaternary structure, homodimer. Part of the tripartite efflux system MacAB-TolC, which is composed of an inner membrane transporter, MacB, a periplasmic membrane fusion protein, MacA, and an outer membrane component, TolC. The complex forms a large protein conduit and can translocate molecules across both the inner and outer membranes. Interacts with MacA.

Its subcellular location is the cell inner membrane. Functionally, part of the tripartite efflux system MacAB-TolC. MacB is a non-canonical ABC transporter that contains transmembrane domains (TMD), which form a pore in the inner membrane, and an ATP-binding domain (NBD), which is responsible for energy generation. Confers resistance against macrolides. This Yersinia pestis bv. Antiqua (strain Nepal516) protein is Macrolide export ATP-binding/permease protein MacB 1.